The sequence spans 340 residues: Eukaryotic translation initiation factor 3 subunit I (340 aa).

6 WD repeats span residues 8–47 (GHER…RLGT), 50–89 (GHQG…CVKV), 91–135 (DFPT…GEGN), 150–189 (CEQS…QLQN), 194–233 (EFDY…VMKT), and 291–330 (GHFG…FDFM).

Belongs to the eIF-3 subunit I family. Component of the eukaryotic translation initiation factor 3 (eIF-3) complex.

It is found in the cytoplasm. Functionally, component of the eukaryotic translation initiation factor 3 (eIF-3) complex, which is involved in protein synthesis of a specialized repertoire of mRNAs and, together with other initiation factors, stimulates binding of mRNA and methionyl-tRNAi to the 40S ribosome. The eIF-3 complex specifically targets and initiates translation of a subset of mRNAs involved in cell proliferation. The polypeptide is Eukaryotic translation initiation factor 3 subunit I (Coccidioides immitis (strain RS) (Valley fever fungus)).